A 364-amino-acid polypeptide reads, in one-letter code: MESYLRKWCLVSVWVLLLGLGFKVKAEPQVPCYFIFGDSLVDNGNNNRLRSIARADYFPYGIDFGGPTGRFSNGRTTVDVLTELLGFDNYIPAYSTVSGQEILQGVNYASAAAGIREETGAQLGQRITFSGQVENYKNTVAQVVEILGDEYTAADYLKRCIYSVGMGSNDYLNNYFMPQFYSTSRQYTPEQYADDLISRYRDQLNALYNYGARKFALVGIGAIGCSPNALAQGSQDGTTCVERINSANRIFNNRLISMVQQLNNAHSDASFTYINAYGAFQDIIANPSAYGFTNTNTACCGIGRNGGQLTCLPGEPPCLNRDEYVFWDAFHPSAAANTAIAKRSYNAQRSSDVYPIDISQLAQL.

Positions 1–26 are cleaved as a signal peptide; sequence MESYLRKWCLVSVWVLLLGLGFKVKA. Ser-39 (nucleophile) is an active-site residue. Active-site charge relay system residues include Asp-328 and His-331.

It belongs to the 'GDSL' lipolytic enzyme family. As to expression, found in phloem exudates.

The protein resides in the secreted. Its subcellular location is the extracellular space. It localises to the apoplast. Functionally, involved in EDS1-dependent systemic acquired resistance, maybe in phloem-mediated long-distance signaling. The chain is GDSL esterase/lipase At1g29660 from Arabidopsis thaliana (Mouse-ear cress).